Consider the following 492-residue polypeptide: Solute carrier family 2, facilitated glucose transporter member 1 (492 aa).

M1 is modified (N-acetylmethionine). Residues 1–11 (MEPTSKKLTGR) are Cytoplasmic-facing. A helical membrane pass occupies residues 12 to 33 (LMLAVGGAVLGSLQFGYNTGVI). The Extracellular portion of the chain corresponds to 34–66 (NAPQKVIEEFYNQTWVQRYGEPIPPATLTTLWS). N45 carries an N-linked (GlcNAc...) asparagine glycan. A helical transmembrane segment spans residues 67–87 (LSVAIFSVGGMIGSFSVGLFV). At 88-90 (NRF) the chain is on the cytoplasmic side. The helical transmembrane segment at 91-112 (GRRNSMLMMNLLAFVSAVLMGF) threads the bilayer. Residues 113–120 (SKLGKSFE) are Extracellular-facing. The chain crosses the membrane as a helical span at residues 121–144 (MLILGRFIIGVYCGLTTGFVPMYV). The Cytoplasmic segment spans residues 145–155 (GEVSPTELRGA). A helical transmembrane segment spans residues 156-176 (LGTLHQLGIVVGILIAQVFGL). Residue Q161 coordinates D-glucose. Topologically, residues 177-185 (DSIMGNQEL) are extracellular. Residues 186-206 (WPLLLSVIFIPALLQCILLPF) traverse the membrane as a helical segment. The Cytoplasmic segment spans residues 207–271 (CPESPRFLLI…LFRSAAYRQP (65 aa)). Phosphoserine is present on S226. A helical membrane pass occupies residues 272–293 (ILIAVVLQLSQQLSGINAVFYY). D-glucose is bound by residues 282-283 (QQ) and N288. At 294 to 306 (STSIFEKAGVQQP) the chain is on the extracellular side. The helical transmembrane segment at 307-328 (VYATIGSGIVNTAFTVVSLFVV) threads the bilayer. N317 provides a ligand contact to D-glucose. Over 329-334 (ERAGRR) the chain is Cytoplasmic. A helical membrane pass occupies residues 335–355 (TLHLIGLAGMAGCAVLMTIAL). Over 356-365 (ALLERLPWMS) the chain is Extracellular. A helical transmembrane segment spans residues 366–388 (YLSIVAIFGFVAFFEVGPGPIPW). Positions 380 and 388 each coordinate D-glucose. The Cytoplasmic segment spans residues 389 to 401 (FIVAELFSQGPRP). A helical transmembrane segment spans residues 402–422 (AAIAVAGFSNWTSNFIVGMCF). Residues 423–429 (QYVEQLC) lie on the Extracellular side of the membrane. Residues 430 to 450 (GPYVFIIFTVLLVLFFIFTYF) traverse the membrane as a helical segment. The Cytoplasmic portion of the chain corresponds to 451 to 492 (KVPETKGRTFDEIASGFRQGGASQSDKTPEELFHPLGADSQV). S465 is modified (phosphoserine). The tract at residues 468-492 (RQGGASQSDKTPEELFHPLGADSQV) is disordered. Residue T478 is modified to Phosphothreonine. Phosphoserine is present on S490.

Belongs to the major facilitator superfamily. Sugar transporter (TC 2.A.1.1) family. Glucose transporter subfamily. As to quaternary structure, found in a complex with ADD2, DMTN and SLC2A1. Interacts (via C-terminus cytoplasmic region) with DMTN. Interacts with SNX27; the interaction is required when endocytosed to prevent degradation in lysosomes and promote recycling to the plasma membrane. Interacts with GIPC (via PDZ domain). Interacts with STOM. Interacts with SGTA (via Gln-rich region). Interacts with BSG. Interacts with SMIM43; the interaction may promote SLC2A1-mediated glucose transport to meet the energy needs of mesendoderm differentiation. Post-translationally, phosphorylation at Ser-226 by PKC promotes glucose uptake by increasing cell membrane localization. Detected in brain capillary (at protein level). Detected in brain capillary.

It localises to the cell membrane. The protein localises to the photoreceptor inner segment. The catalysed reaction is D-glucose(out) = D-glucose(in). With respect to regulation, the uptake of glucose is inhibited by cytochalasin B. Glucose uptake is increased in response to phorbol ester 12-O-tetradecanoylphorbol-13-acetate (TPA) treatment: TPA-induced glucose uptake requires phosphorylation at Ser-226. In terms of biological role, facilitative glucose transporter, which is responsible for constitutive or basal glucose uptake. Has a very broad substrate specificity; can transport a wide range of aldoses including both pentoses and hexoses. Most important energy carrier of the brain: present at the blood-brain barrier and assures the energy-independent, facilitative transport of glucose into the brain. In association with BSG and NXNL1, promotes retinal cone survival by increasing glucose uptake into photoreceptors. Required for mesendoderm differentiation. In Bos taurus (Bovine), this protein is Solute carrier family 2, facilitated glucose transporter member 1.